The sequence spans 963 residues: Ras-interacting protein 1 (963 aa).

Residues 1–10 (MLSGERKEGG) show a composition bias toward basic and acidic residues. 2 disordered regions span residues 1 to 22 (MLSG…LPVG) and 35 to 118 (LGRR…AQRW). The span at 41-57 (SAASVKSSSSDTGSRSS) shows a compositional bias: low complexity. R94 bears the Omega-N-methylarginine mark. The segment covering 96–113 (SGTGTTGSSGAGGPGTPG) has biased composition (gly residues). The Ras-associating domain occupies 144-259 (PPGVLKIFGA…RRFELRGREE (116 aa)). Phosphoserine is present on residues S188, S280, and S292. The interval 267–356 (AFGAADSEGT…LSMAPGAADA (90 aa)) is disordered. Positions 290–301 (AASGGAALASPG) are enriched in low complexity. Gly residues predominate over residues 302–313 (PGTGSGAPAGSG). Over residues 320-333 (NLSLRRSVSELSLQ) the composition is skewed to low complexity. Residues S326, S328, S331, and S419 each carry the phosphoserine modification. The region spanning 600-897 (GRLARLIKEA…PPAEREAVDT (298 aa)) is the Dilute domain.

In terms of assembly, interacts with Ras family members that have been activated by GTP binding. Interacts with HRAS, RAP1A, RAP2, RRAS, RAF1 and RRAS2. Interacts with MYH9 and ARHGAP29. As to expression, highly expressed in heart. Detected at lower levels in placenta and pancreas.

The protein resides in the cytoplasm. It is found in the perinuclear region. The protein localises to the golgi apparatus. Its subcellular location is the golgi stack. Required for the proper formation of vascular structures that develop via both vasculogenesis and angiogenesis. Acts as a critical and vascular-specific regulator of GTPase signaling, cell architecture, and adhesion, which is essential for endothelial cell morphogenesis and blood vessel tubulogenesis. Regulates the activity of Rho GTPases in part by recruiting ARHGAP29 and suppressing RhoA signaling and dampening ROCK and MYH9 activities in endothelial cells. May act as effector for Golgi-bound HRAS and other Ras-like proteins. May promote HRAS-mediated transformation. Negative regulator of amino acid starvation-induced autophagy. The polypeptide is Ras-interacting protein 1 (RASIP1) (Homo sapiens (Human)).